The chain runs to 330 residues: Flotillin-like protein FloA (330 aa).

The next 2 helical transmembrane spans lie at 3-23 and 26-46; these read IISVIVIGGLVLVAIVATLYM and LRLWIAAQASGAGVSMLTLIA.

The protein belongs to the flotillin-like FloA family. Homooligomerizes.

It localises to the cell membrane. The protein resides in the membrane raft. In terms of biological role, found in functional membrane microdomains (FMM) that may be equivalent to eukaryotic membrane rafts. FMMs are highly dynamic and increase in number as cells age. Flotillins are thought to be important factors in membrane fluidity. This Sorangium cellulosum (strain So ce56) (Polyangium cellulosum (strain So ce56)) protein is Flotillin-like protein FloA.